A 195-amino-acid polypeptide reads, in one-letter code: Cell division protein SepF (195 aa).

The segment at R32–R54 is disordered.

The protein belongs to the SepF family. In terms of assembly, homodimer. Interacts with FtsZ.

It is found in the cytoplasm. Its function is as follows. Cell division protein that is part of the divisome complex and is recruited early to the Z-ring. Probably stimulates Z-ring formation, perhaps through the cross-linking of FtsZ protofilaments. Its function overlaps with FtsA. This chain is Cell division protein SepF, found in Gloeothece citriformis (strain PCC 7424) (Cyanothece sp. (strain PCC 7424)).